We begin with the raw amino-acid sequence, 449 residues long: Heterogeneous nuclear ribonucleoprotein H (449 aa).

An N-acetylmethionine modification is found at M1. M2 bears the N-acetylmethionine; in Heterogeneous nuclear ribonucleoprotein H, N-terminally processed mark. The RRM 1 domain occupies 11-90 (FVVKVRGLPW…RYVEVFKSNN (80 aa)). S23 carries the phosphoserine modification. K35 participates in a covalent cross-link: Glycyl lysine isopeptide (Lys-Gly) (interchain with G-Cter in SUMO2). Phosphoserine is present on residues S54 and S63. Glycyl lysine isopeptide (Lys-Gly) (interchain with G-Cter in SUMO2) cross-links involve residues K87 and K98. The region spanning 111 to 188 (GFVRLRGLPF…RYIEIFKSSR (78 aa)) is the RRM 2 domain. Position 233 is a dimethylated arginine; alternate (R233). R233 carries the omega-N-methylarginine; alternate modification. The 1-1 repeat unit spans residues 234 to 249 (GAYGGGYGGYDDYNGY). Residues 234–433 (GAYGGGYGGY…YGGQSSMSGY (200 aa)) form a 2 X 16 AA Gly-rich approximate repeats region. At Y246 the chain carries Phosphotyrosine. Residues 289-364 (HCVHMRGLPY…RYVELFLNST (76 aa)) enclose the RRM 3 domain. At S310 the chain carries Phosphoserine. 3 consecutive repeat copies span residues 354 to 372 (HRYVELFLNSTAGASGGAY), 374 to 392 (HRYVELFLNSTAGASGGAY), and 418 to 433 (GGYGGGYGGQSSMSGY). Residues 354-392 (HRYVELFLNSTAGASGGAYEHRYVELFLNSTAGASGGAY) form a 2 X 19 AA perfect repeats region.

As to quaternary structure, part of a ternary complex containing FUBP2, PTBP1, PTBP2 and HNRNPH1. Identified in the spliceosome C complex. Interacts with IGF2BP1. Interacts with CUGBP1; the interaction is RNA-dependent. Interacts with MBNL1; the interaction in RNA-independent.

Its subcellular location is the nucleus. The protein localises to the nucleoplasm. Its function is as follows. This protein is a component of the heterogeneous nuclear ribonucleoprotein (hnRNP) complexes which provide the substrate for the processing events that pre-mRNAs undergo before becoming functional, translatable mRNAs in the cytoplasm. Mediates pre-mRNA alternative splicing regulation. Inhibits, together with CUGBP1, insulin receptor (IR) pre-mRNA exon 11 inclusion in myoblast. Binds to the IR RNA. Binds poly(RG). The sequence is that of Heterogeneous nuclear ribonucleoprotein H (Hnrnph1) from Mus musculus (Mouse).